We begin with the raw amino-acid sequence, 421 residues long: D-amino acid dehydrogenase (421 aa).

Ile-3–Tyr-17 serves as a coordination point for FAD.

Belongs to the DadA oxidoreductase family. The cofactor is FAD.

It carries out the reaction a D-alpha-amino acid + A + H2O = a 2-oxocarboxylate + AH2 + NH4(+). Its pathway is amino-acid degradation; D-alanine degradation; NH(3) and pyruvate from D-alanine: step 1/1. Its function is as follows. Oxidative deamination of D-amino acids. The sequence is that of D-amino acid dehydrogenase from Xanthobacter autotrophicus (strain ATCC BAA-1158 / Py2).